Here is a 448-residue protein sequence, read N- to C-terminus: Signal recognition particle 54 kDa protein (448 aa).

GTP is bound by residues 107–114 (GIQGSGKT), 189–193 (DTAGR), and 247–250 (TKLD).

The protein belongs to the GTP-binding SRP family. SRP54 subfamily. As to quaternary structure, part of the signal recognition particle protein translocation system, which is composed of SRP and FtsY. Archaeal SRP consists of a 7S RNA molecule of 300 nucleotides and two protein subunits: SRP54 and SRP19.

It is found in the cytoplasm. It catalyses the reaction GTP + H2O = GDP + phosphate + H(+). In terms of biological role, involved in targeting and insertion of nascent membrane proteins into the cytoplasmic membrane. Binds to the hydrophobic signal sequence of the ribosome-nascent chain (RNC) as it emerges from the ribosomes. The SRP-RNC complex is then targeted to the cytoplasmic membrane where it interacts with the SRP receptor FtsY. The polypeptide is Signal recognition particle 54 kDa protein (Thermococcus gammatolerans (strain DSM 15229 / JCM 11827 / EJ3)).